Reading from the N-terminus, the 393-residue chain is Protein shisa-9B (393 aa).

An N-terminal signal peptide occupies residues 1–20 (MKSTGLLLGYFLMKVLVCDA). Residues 21–131 (EGEPGKSLDG…MDQHDPTKDK (111 aa)) are Extracellular-facing. Residues 28 to 52 (LDGAVTASGSNDSRDGENGLSETPH) are disordered. Asn38 is a glycosylation site (N-linked (GlcNAc...) asparagine). A helical transmembrane segment spans residues 132 to 152 (TNLIVYIICGVVAIMALVGIF). Residues 153-393 (TKLGLEKAHR…VTNSKTEVTV (241 aa)) are Cytoplasmic-facing. Residues 307-340 (QKQNGHKSKSTKVHSSHPLAYGSNTIANPGRMSS) form a disordered region. Residues 310–321 (NGHKSKSTKVHS) are compositionally biased toward basic residues.

Belongs to the shisa family. SHISA9 subfamily. As to quaternary structure, component of some AMPA receptors (ionotropic glutamate receptors) complex.

It is found in the cell projection. Its subcellular location is the dendritic spine membrane. The protein localises to the synapse. Regulator of short-term neuronal synaptic plasticity in the dentate gyrus. Associates with AMPA receptors (ionotropic glutamate receptors) in synaptic spines and promotes AMPA receptor desensitization at excitatory synapses. This chain is Protein shisa-9B (shisa9b), found in Danio rerio (Zebrafish).